We begin with the raw amino-acid sequence, 131 residues long: Ribosome-binding factor A (131 aa).

The protein belongs to the RbfA family. As to quaternary structure, monomer. Binds 30S ribosomal subunits, but not 50S ribosomal subunits or 70S ribosomes.

It localises to the cytoplasm. One of several proteins that assist in the late maturation steps of the functional core of the 30S ribosomal subunit. Associates with free 30S ribosomal subunits (but not with 30S subunits that are part of 70S ribosomes or polysomes). Required for efficient processing of 16S rRNA. May interact with the 5'-terminal helix region of 16S rRNA. The sequence is that of Ribosome-binding factor A from Mannheimia succiniciproducens (strain KCTC 0769BP / MBEL55E).